A 581-amino-acid polypeptide reads, in one-letter code: Arginine--tRNA ligase (581 aa).

The short motif at 126–136 is the 'HIGH' region element; sequence PNLAKEMHVGH.

It belongs to the class-I aminoacyl-tRNA synthetase family. As to quaternary structure, monomer.

The protein localises to the cytoplasm. The catalysed reaction is tRNA(Arg) + L-arginine + ATP = L-arginyl-tRNA(Arg) + AMP + diphosphate. This Shewanella sp. (strain MR-4) protein is Arginine--tRNA ligase.